A 754-amino-acid polypeptide reads, in one-letter code: 1,4-alpha-glucan branching enzyme GlgB (754 aa).

The active-site Nucleophile is the aspartate 431. The Proton donor role is filled by glutamate 484.

It belongs to the glycosyl hydrolase 13 family. GlgB subfamily. In terms of assembly, monomer.

The enzyme catalyses Transfers a segment of a (1-&gt;4)-alpha-D-glucan chain to a primary hydroxy group in a similar glucan chain.. It participates in glycan biosynthesis; glycogen biosynthesis. Catalyzes the formation of the alpha-1,6-glucosidic linkages in glycogen by scission of a 1,4-alpha-linked oligosaccharide from growing alpha-1,4-glucan chains and the subsequent attachment of the oligosaccharide to the alpha-1,6 position. The protein is 1,4-alpha-glucan branching enzyme GlgB of Prochlorococcus marinus subsp. pastoris (strain CCMP1986 / NIES-2087 / MED4).